We begin with the raw amino-acid sequence, 541 residues long: Transmembrane protein 151 homolog (541 aa).

The next 3 membrane-spanning stretches (helical) occupy residues 27 to 47, 73 to 93, and 254 to 274; these read GYGK…YATF, YNFV…MECW, and PWFL…SWPL. Positions 503–541 are disordered; the sequence is ASISHSSSKDLKSLTLKSSSSNNNNNNSNNNNNDDPEHP. Residues 515-535 show a composition bias toward low complexity; it reads SLTLKSSSSNNNNNNSNNNNN.

The protein belongs to the TMEM151 family.

It is found in the membrane. This is Transmembrane protein 151 homolog from Caenorhabditis elegans.